A 51-amino-acid chain; its full sequence is Large ribosomal subunit protein eL39 (51 aa).

This sequence belongs to the eukaryotic ribosomal protein eL39 family.

The chain is Large ribosomal subunit protein eL39 from Methanobrevibacter smithii (strain ATCC 35061 / DSM 861 / OCM 144 / PS).